A 107-amino-acid chain; its full sequence is Dispanin subfamily A member 2b (107 aa).

Residues 1–31 (MEYRTDQVPMSPRSVQGAPGTLPIRDHLPWS) lie on the Extracellular side of the membrane. A helical transmembrane segment spans residues 32–52 (IFNLFYMNVCCLGLTAMIFSV). 2 S-palmitoyl cysteine lipidation sites follow: C41 and C42. Residues 53–77 (KSRDRKVVGDVEGARHYGSTARSLN) are Cytoplasmic-facing. The chain crosses the membrane as a helical span at residues 78 to 98 (IAATVLGILLIIILIGLAATG). At 99–107 (TIQALKYKG) the chain is on the extracellular side.

The protein belongs to the CD225/Dispanin family. Expressed various cell types in torpedo electric organ and muscle, especially fibroblasts, capillary endothelial cells, and axonal cuff cells.

The protein localises to the cell membrane. The protein is Dispanin subfamily A member 2b of Torpedo marmorata (Marbled electric ray).